The following is a 289-amino-acid chain: (3R)-3-[(carboxymethyl)amino]fatty acid oxygenase/decarboxylase (289 aa).

3 residues coordinate a (3R)-3-[(carboxymethyl)amino]fatty acid: Y65, Y70, and G93. The Fe(2+) site is built by H97 and D99. Residues Y100 and K158 each contribute to the a (3R)-3-[(carboxymethyl)amino]fatty acid site. H260 lines the Fe(2+) pocket. H264 serves as a coordination point for 2-oxoglutarate. An a (3R)-3-[(carboxymethyl)amino]fatty acid-binding site is contributed by R275.

The protein belongs to the TfdA dioxygenase family. Requires Fe(2+) as cofactor.

The catalysed reaction is a (3R)-3-[(carboxymethyl)amino]fatty acid + 2 2-oxoglutarate + 2 O2 = a (3R)-3-isocyanyl-fatty acid + 2 succinate + 3 CO2 + 2 H2O. The enzyme catalyses a (3R)-3-[(carboxymethyl)amino]fatty acid + 2-oxoglutarate + O2 = a (3R)-3-{[carboxy(hydroxy)methyl]amino}fatty acid + succinate + CO2. It catalyses the reaction a (3R)-3-{[carboxy(hydroxy)methyl]amino}fatty acid + 2-oxoglutarate + O2 = a (3R)-3-isocyanyl-fatty acid + succinate + 2 CO2 + 2 H2O. In terms of biological role, involved in the biosynthesis of a unique class of isonitrile lipopeptides (INLPs) that seem to play a role in metal acquisition. Catalyzes the conversion of (3R)-3-[(carboxymethyl)amino]fatty acids to (3R)-3-isocyanyl-fatty acids through an oxidative decarboxylation mechanism, thereby generating the isonitrile group of INLPs. This is (3R)-3-[(carboxymethyl)amino]fatty acid oxygenase/decarboxylase from Mycobacterium bovis (strain ATCC BAA-935 / AF2122/97).